We begin with the raw amino-acid sequence, 177 residues long: Large ribosomal subunit protein uL6 (177 aa).

N6-acetyllysine is present on Lys-44.

Belongs to the universal ribosomal protein uL6 family. In terms of assembly, part of the 50S ribosomal subunit.

This protein binds to the 23S rRNA, and is important in its secondary structure. It is located near the subunit interface in the base of the L7/L12 stalk, and near the tRNA binding site of the peptidyltransferase center. This is Large ribosomal subunit protein uL6 from Escherichia coli O139:H28 (strain E24377A / ETEC).